We begin with the raw amino-acid sequence, 167 residues long: SsrA-binding protein (167 aa).

A compositionally biased stretch (basic and acidic residues) spans 139–158 (QNHDKRDAAKDRDWQRDKQR). A disordered region spans residues 139–167 (QNHDKRDAAKDRDWQRDKQRVMRRHNRDA).

Belongs to the SmpB family.

It localises to the cytoplasm. In terms of biological role, required for rescue of stalled ribosomes mediated by trans-translation. Binds to transfer-messenger RNA (tmRNA), required for stable association of tmRNA with ribosomes. tmRNA and SmpB together mimic tRNA shape, replacing the anticodon stem-loop with SmpB. tmRNA is encoded by the ssrA gene; the 2 termini fold to resemble tRNA(Ala) and it encodes a 'tag peptide', a short internal open reading frame. During trans-translation Ala-aminoacylated tmRNA acts like a tRNA, entering the A-site of stalled ribosomes, displacing the stalled mRNA. The ribosome then switches to translate the ORF on the tmRNA; the nascent peptide is terminated with the 'tag peptide' encoded by the tmRNA and targeted for degradation. The ribosome is freed to recommence translation, which seems to be the essential function of trans-translation. The chain is SsrA-binding protein from Xanthomonas axonopodis pv. citri (strain 306).